A 480-amino-acid chain; its full sequence is uncharacterized protein (480 aa).

A DNA-binding region (zn(2)-C6 fungal-type) is located at residues 16–46 (CDRCRRRKIRCTGSDIPGQPCLACQKAHADC). Over residues 298 to 307 (SFGASVSPKS) the composition is skewed to low complexity. The disordered stretch occupies residues 298 to 325 (SFGASVSPKSTPGSNSTGAAVDTNSVHS). Residues 308–325 (TPGSNSTGAAVDTNSVHS) are compositionally biased toward polar residues.

It is found in the cytoplasm. The protein localises to the nucleus. This is an uncharacterized protein from Schizosaccharomyces pombe (strain 972 / ATCC 24843) (Fission yeast).